Here is a 388-residue protein sequence, read N- to C-terminus: Lipid-A-disaccharide synthase (388 aa).

The protein belongs to the LpxB family.

It catalyses the reaction a lipid X + a UDP-2-N,3-O-bis[(3R)-3-hydroxyacyl]-alpha-D-glucosamine = a lipid A disaccharide + UDP + H(+). It participates in bacterial outer membrane biogenesis; LPS lipid A biosynthesis. In terms of biological role, condensation of UDP-2,3-diacylglucosamine and 2,3-diacylglucosamine-1-phosphate to form lipid A disaccharide, a precursor of lipid A, a phosphorylated glycolipid that anchors the lipopolysaccharide to the outer membrane of the cell. The sequence is that of Lipid-A-disaccharide synthase from Burkholderia thailandensis (strain ATCC 700388 / DSM 13276 / CCUG 48851 / CIP 106301 / E264).